The chain runs to 365 residues: MASEEFPAAKTALEEYENIERQMGEQEVWSNPDKMRKLGRRQAQLGTIVNAYRTWLNIRNDLDAAQEMAGEDPDFAQEAKRLESELPEAEEKLRTALIPRDPDDARDVIMEIKAGAGGEEAALFAGDLLRMYMRYAEKRGWGVTIQSENSTELGGVKDVQMAIRAKGNPSPEEGVWASLKYEGGVHRVQRIPVTESQGRIQTSAAGVIVFPEADEDDDEIEIDPKDLKIDIFMSSGPGGQSVNTTYSAVRMTHIPTGIVVSMQDEKSQIQNRAAALRVLKSRLLAMKHEQEAAEAADMRHSQVRSLDRSERIRTYNFPENRIVDHRTNYKAYNLDAVLDGDLQAVIDSDIQADEEQRLASQQQQQ.

Gln-240 is modified (N5-methylglutamine).

The protein belongs to the prokaryotic/mitochondrial release factor family. Post-translationally, methylated by PrmC. Methylation increases the termination efficiency of RF1.

Its subcellular location is the cytoplasm. Peptide chain release factor 1 directs the termination of translation in response to the peptide chain termination codons UAG and UAA. This is Peptide chain release factor 1 from Bifidobacterium animalis subsp. lactis (strain AD011).